Here is a 194-residue protein sequence, read N- to C-terminus: MSTRNPQRKRRGGTVNSRQTQKRTRETTSTPEVSLETEPIELVETVGDEIVDLTCESLEPVVVDLTHNDSVVIVEERRRPRRNGRRLRQDHADSCVVSSDDEELSRDKDVYVTTHTPRSTKDDGATGPRPSGTVSCPICMDGYSEIVQNGRLIVSTECGHVFCSQCLRDSLKNANTCPTCRKKINHKRYHPIYI.

The segment covering 1–12 (MSTRNPQRKRRG) has biased composition (basic residues). Positions 1 to 20 (MSTRNPQRKRRGGTVNSRQT) are required for ubiquitination activity. Residues 1-39 (MSTRNPQRKRRGGTVNSRQTQKRTRETTSTPEVSLETEP) are disordered. A mediates interaction with TRPS1 region spans residues 6–65 (PQRKRRGGTVNSRQTQKRTRETTSTPEVSLETEPIELVETVGDEIVDLTCESLEPVVVDL). The SUMO interaction motif 1; mediates the binding to polysumoylated substrates motif lies at 40–43 (IELV). An SUMO interaction motif 2; mediates the binding to polysumoylated substrates motif is present at residues 50–53 (IVDL). Positions 61–63 (VVV) match the SUMO interaction motif 3; mediates the binding to polysumoylated substrates motif. Positions 71–74 (VVIV) match the SUMO interaction motif 4; mediates the binding to polysumoylated substrates motif. A phosphoserine mark is found at serine 98 and serine 99. Residues 110–130 (VYVTTHTPRSTKDDGATGPRP) form a disordered region. Zn(2+) is bound by residues cysteine 136, cysteine 139, cysteine 158, histidine 160, cysteine 163, cysteine 166, cysteine 177, and cysteine 180. The RING-type zinc finger occupies 136-181 (CPICMDGYSEIVQNGRLIVSTECGHVFCSQCLRDSLKNANTCPTCR).

As to quaternary structure, homodimer (via RING-type zinc finger domain). Interacts with GSC2. Interacts with AR/the androgen receptor and TBP. Interacts with TCF20. Interacts with PATZ1. Interacts with TRPS1; negatively regulates TRPS1 transcriptional repressor activity. Interacts with PML (isoform PML-1, isoform PML-2, isoform PML-3, isoform PML-4, isoform PML-5 and isoform PML-6). Interacts with PRDM1/Blimp-1. Sumoylated; conjugated by one or two SUMO1 moieties. In terms of processing, autoubiquitinated. In terms of tissue distribution, in the embryo, expressed primarily in the developing nervous system with strong expression in the dorsal root ganglia and gonads. Ubiquitously expressed in the adult.

The protein localises to the cytoplasm. Its subcellular location is the nucleus. It localises to the PML body. It carries out the reaction S-ubiquitinyl-[E2 ubiquitin-conjugating enzyme]-L-cysteine + [acceptor protein]-L-lysine = [E2 ubiquitin-conjugating enzyme]-L-cysteine + N(6)-ubiquitinyl-[acceptor protein]-L-lysine.. It functions in the pathway protein modification; protein ubiquitination. Functionally, E3 ubiquitin-protein ligase which binds polysumoylated chains covalently attached to proteins and mediates 'Lys-6'-, 'Lys-11'-, 'Lys-48'- and 'Lys-63'-linked polyubiquitination of those substrates and their subsequent targeting to the proteasome for degradation. Regulates the degradation of several proteins including PML and the transcriptional activator PEA3. Involved in chromosome alignment and spindle assembly, it regulates the kinetochore CENPH-CENPI-CENPK complex by targeting polysumoylated CENPI to proteasomal degradation. Regulates the cellular responses to hypoxia and heat shock through degradation of respectively EPAS1 and PARP1. Alternatively, it may also bind DNA/nucleosomes and have a more direct role in the regulation of transcription for instance enhancing basal transcription and steroid receptor-mediated transcriptional activation. Catalyzes ubiquitination of sumoylated PARP1 in response to PARP1 trapping to chromatin, leading to PARP1 removal from chromatin by VCP/p97. This is E3 ubiquitin-protein ligase RNF4 from Mus musculus (Mouse).